The sequence spans 530 residues: Na(+)/H(+) antiporter NhaB (530 aa).

11 helical membrane passes run 23–43, 45–65, 90–110, 113–133, 140–160, 205–225, 238–258, 308–328, 351–371, 451–471, and 479–499; these read VAII…NPFL, GWLL…CYPL, LVAN…IYFM, LLLF…LLSI, AFLS…SVAV, LLMH…VGEP, FGEF…AGML, IAVW…LIGL, EEAL…AVII, ATPN…APLI, and VIMA…GIMF.

It belongs to the NhaB Na(+)/H(+) (TC 2.A.34) antiporter family.

The protein resides in the cell inner membrane. It catalyses the reaction 2 Na(+)(in) + 3 H(+)(out) = 2 Na(+)(out) + 3 H(+)(in). Functionally, na(+)/H(+) antiporter that extrudes sodium in exchange for external protons. This Vibrio cholerae serotype O1 (strain ATCC 39541 / Classical Ogawa 395 / O395) protein is Na(+)/H(+) antiporter NhaB.